The following is a 331-amino-acid chain: Ornithine carbamoyltransferase, catabolic (331 aa).

Residues 57 to 60, Gln82, Arg106, and 133 to 136 contribute to the carbamoyl phosphate site; these read STRT and HPTQ. Residues Asn166, Asp230, and 234 to 235 contribute to the L-ornithine site; that span reads SM. Carbamoyl phosphate is bound by residues 272–273 and Arg317; that span reads CL.

It belongs to the aspartate/ornithine carbamoyltransferase superfamily. OTCase family.

The protein localises to the cytoplasm. The catalysed reaction is carbamoyl phosphate + L-ornithine = L-citrulline + phosphate + H(+). It functions in the pathway amino-acid degradation; L-arginine degradation via ADI pathway; carbamoyl phosphate from L-arginine: step 2/2. In terms of biological role, reversibly catalyzes the transfer of the carbamoyl group from carbamoyl phosphate (CP) to the N(epsilon) atom of ornithine (ORN) to produce L-citrulline. This chain is Ornithine carbamoyltransferase, catabolic (arcB), found in Clostridium perfringens (strain ATCC 13124 / DSM 756 / JCM 1290 / NCIMB 6125 / NCTC 8237 / Type A).